The following is a 513-amino-acid chain: ATP synthase subunit alpha (513 aa).

ATP is bound at residue 169-176 (GDRQTGKT).

Belongs to the ATPase alpha/beta chains family. In terms of assembly, F-type ATPases have 2 components, CF(1) - the catalytic core - and CF(0) - the membrane proton channel. CF(1) has five subunits: alpha(3), beta(3), gamma(1), delta(1), epsilon(1). CF(0) has three main subunits: a(1), b(2) and c(9-12). The alpha and beta chains form an alternating ring which encloses part of the gamma chain. CF(1) is attached to CF(0) by a central stalk formed by the gamma and epsilon chains, while a peripheral stalk is formed by the delta and b chains.

The protein resides in the cell inner membrane. The catalysed reaction is ATP + H2O + 4 H(+)(in) = ADP + phosphate + 5 H(+)(out). Functionally, produces ATP from ADP in the presence of a proton gradient across the membrane. The alpha chain is a regulatory subunit. The chain is ATP synthase subunit alpha from Hydrogenovibrio crunogenus (strain DSM 25203 / XCL-2) (Thiomicrospira crunogena).